The following is a 242-amino-acid chain: HTH-type transcriptional regulator GadW (242 aa).

The HTH araC/xylS-type domain occupies 139–236 (GKVERLISFD…GVTPHQFAQH (98 aa)). 2 DNA-binding regions (H-T-H motif) span residues 156–177 (RDIA…QDEN) and 203–226 (LHTI…RQYY).

In terms of assembly, homodimer.

Depending on the conditions (growth phase and medium), acts as a positive or negative regulator of gadA and gadBC. Repression occurs directly or via the repression of the expression of gadX. Activation occurs directly by the binding of GadW to the gadA and gadBC promoters. The chain is HTH-type transcriptional regulator GadW (gadW) from Escherichia coli (strain K12).